Consider the following 254-residue polypeptide: PF03932 family protein CutC (254 aa).

Belongs to the CutC family.

It is found in the cytoplasm. The polypeptide is PF03932 family protein CutC (Yersinia enterocolitica serotype O:8 / biotype 1B (strain NCTC 13174 / 8081)).